The following is a 1418-amino-acid chain: ABC transporter G family member 38 (1418 aa).

The interval 1-27 (MAHYRVSSEVENIMNRDRSHRKNEEED) is disordered. An ABC transporter 1 domain is found at 147 to 419 (TKIRVLPDRK…FEFMGFKCPE (273 aa)). 179-186 (GPPGSGKS) serves as a coordination point for ATP. Positions 497-710 (ELLKACLERE…IQTAVSVNEF (214 aa)) constitute an ABC transmembrane type-2 1 domain. 6 helical membrane-spanning segments follow: residues 516–536 (TFVL…VVFW), 548–568 (GIIY…SGFF), 600–620 (IITF…TYFT), 634–654 (YLVL…IAAV), 659–679 (VVSN…SGYV), and 729–749 (FFVE…STIL). Residues 821-1073 (MTFENITYSV…QLIEYFEGIR (253 aa)) form the ABC transporter 2 domain. 866–873 (GVSGAGKT) is an ATP binding site. The region spanning 1146–1360 (SQFQACLWKQ…GLYGLTIAQY (215 aa)) is the ABC transmembrane type-2 2 domain. 7 helical membrane passes run 1167–1187 (AVRF…FWSL), 1197–1217 (IFNS…QSAA), 1249–1269 (VIIE…IVYG), 1284–1304 (IFFT…VISV), 1310–1330 (IASI…GFTI), 1341–1361 (WFTY…AQYG), and 1387–1407 (FLWV…FIYA).

This sequence belongs to the ABC transporter superfamily. ABCG family. PDR (TC 3.A.1.205) subfamily. In terms of tissue distribution, expressed in roots and siliques at low levels.

The protein resides in the membrane. Functionally, may be a general defense protein. This chain is ABC transporter G family member 38 (ABCG38), found in Arabidopsis thaliana (Mouse-ear cress).